A 437-amino-acid polypeptide reads, in one-letter code: CCA-adding enzyme (437 aa).

The ATP site is built by Ser-47 and Arg-50. 2 residues coordinate CTP: Ser-47 and Arg-50. Residues Glu-59, Asp-61, and Asp-110 each contribute to the Mg(2+) site. His-133, Lys-152, and Tyr-161 together coordinate ATP. His-133, Lys-152, and Tyr-161 together coordinate CTP.

Belongs to the tRNA nucleotidyltransferase/poly(A) polymerase family. Archaeal CCA-adding enzyme subfamily. As to quaternary structure, homodimer. Requires Mg(2+) as cofactor.

It carries out the reaction a tRNA precursor + 2 CTP + ATP = a tRNA with a 3' CCA end + 3 diphosphate. The enzyme catalyses a tRNA with a 3' CCA end + 2 CTP + ATP = a tRNA with a 3' CCACCA end + 3 diphosphate. In terms of biological role, catalyzes the addition and repair of the essential 3'-terminal CCA sequence in tRNAs without using a nucleic acid template. Adds these three nucleotides in the order of C, C, and A to the tRNA nucleotide-73, using CTP and ATP as substrates and producing inorganic pyrophosphate. tRNA 3'-terminal CCA addition is required both for tRNA processing and repair. Also involved in tRNA surveillance by mediating tandem CCA addition to generate a CCACCA at the 3' terminus of unstable tRNAs. While stable tRNAs receive only 3'-terminal CCA, unstable tRNAs are marked with CCACCA and rapidly degraded. The structural flexibility of RNA controls the choice between CCA versus CCACCA addition: following the first CCA addition cycle, nucleotide-binding to the active site triggers a clockwise screw motion, producing torque on the RNA. This ejects stable RNAs, whereas unstable RNAs are refolded while bound to the enzyme and subjected to a second CCA catalytic cycle. The sequence is that of CCA-adding enzyme from Archaeoglobus fulgidus (strain ATCC 49558 / DSM 4304 / JCM 9628 / NBRC 100126 / VC-16).